Reading from the N-terminus, the 615-residue chain is Chaperone protein DnaK (615 aa).

Thr177 is subject to Phosphothreonine; by autocatalysis. The interval 567-615 is disordered; sequence TKESQGIAMKAYQKAQEKQAQEKGTQENTTAKNEKPQDEVVDADFEEKK. A compositionally biased stretch (basic and acidic residues) spans 581-591; the sequence is AQEKQAQEKGT. Positions 605–615 are enriched in acidic residues; sequence EVVDADFEEKK.

The protein belongs to the heat shock protein 70 family.

Its function is as follows. Acts as a chaperone. The sequence is that of Chaperone protein DnaK from Onion yellows phytoplasma (strain OY-M).